We begin with the raw amino-acid sequence, 79 residues long: MKKYFQPSFVILIIFTVLVLGVVGNMSVDQKRCWATLKENNCVHDECRSMCLKKNPKGHGRCIKSSKGRIICLCGYDCP.

An N-terminal signal peptide occupies residues 1–24; that stretch reads MKKYFQPSFVILIIFTVLVLGVVG. 4 disulfide bridges follow: Cys33–Cys78, Cys42–Cys62, Cys47–Cys72, and Cys51–Cys74.

Belongs to the DEFL family.

Its subcellular location is the secreted. The protein is Putative defensin-like protein 137 (LCR14) of Arabidopsis thaliana (Mouse-ear cress).